The sequence spans 498 residues: tRNA-2-methylthio-N(6)-dimethylallyladenosine synthase (498 aa).

An MTTase N-terminal domain is found at 2–118 (PRYSITTFGC…LPGLLGDLAI (117 aa)). Residues Cys11, Cys47, Cys81, Cys163, Cys167, and Cys170 each coordinate [4Fe-4S] cluster. The region spanning 149–393 (PRAAPTAFVT…FEESEALLAA (245 aa)) is the Radical SAM core domain. The TRAM domain maps to 396–467 (SALVGTTQEV…KHSLQAELTE (72 aa)). The tract at residues 469-498 (ARAAARPRQRGGLEPRPARRSLPVVAAEGG) is disordered.

This sequence belongs to the methylthiotransferase family. MiaB subfamily. As to quaternary structure, monomer. It depends on [4Fe-4S] cluster as a cofactor.

The protein localises to the cytoplasm. The enzyme catalyses N(6)-dimethylallyladenosine(37) in tRNA + (sulfur carrier)-SH + AH2 + 2 S-adenosyl-L-methionine = 2-methylsulfanyl-N(6)-dimethylallyladenosine(37) in tRNA + (sulfur carrier)-H + 5'-deoxyadenosine + L-methionine + A + S-adenosyl-L-homocysteine + 2 H(+). Catalyzes the methylthiolation of N6-(dimethylallyl)adenosine (i(6)A), leading to the formation of 2-methylthio-N6-(dimethylallyl)adenosine (ms(2)i(6)A) at position 37 in tRNAs that read codons beginning with uridine. In Sorangium cellulosum (strain So ce56) (Polyangium cellulosum (strain So ce56)), this protein is tRNA-2-methylthio-N(6)-dimethylallyladenosine synthase.